A 323-amino-acid polypeptide reads, in one-letter code: Phosphopantothenate--cysteine ligase 2 (323 aa).

This sequence belongs to the PPC synthetase family. Homodimer.

It catalyses the reaction (R)-4'-phosphopantothenate + L-cysteine + CTP = N-[(R)-4-phosphopantothenoyl]-L-cysteine + CMP + diphosphate + H(+). It functions in the pathway cofactor biosynthesis; coenzyme A biosynthesis; CoA from (R)-pantothenate: step 2/5. Functionally, catalyzes the first step in the biosynthesis of coenzyme A from vitamin B5, where cysteine is conjugated to 4'-phosphopantothenate to form 4-phosphopantothenoylcysteine. The sequence is that of Phosphopantothenate--cysteine ligase 2 from Oryza sativa subsp. japonica (Rice).